We begin with the raw amino-acid sequence, 644 residues long: Exoribonuclease 2 (644 aa).

In terms of domain architecture, RNB spans 189–516; it reads RQDLTALNFV…NHRLLKAVIK (328 aa). Positions 561–643 constitute an S1 motif domain; that stretch reads NTRFAAEIID…ETRSIIARPA (83 aa).

It belongs to the RNR ribonuclease family. RNase II subfamily.

Its subcellular location is the cytoplasm. The enzyme catalyses Exonucleolytic cleavage in the 3'- to 5'-direction to yield nucleoside 5'-phosphates.. Its function is as follows. Involved in mRNA degradation. Hydrolyzes single-stranded polyribonucleotides processively in the 3' to 5' direction. The chain is Exoribonuclease 2 from Salmonella gallinarum (strain 287/91 / NCTC 13346).